The sequence spans 500 residues: MTLVDVRTPDPKRFIPGATGDWEVIVGMEVHAQVLSNSKLFSGASTEFGKPQNSNVSLVDAAMPGMLPVINEECVKQAVRTGLGLKAQINKRSLFDRKNYFYPDLPQGYQISQFKDPIVGEGKIVISLGPDRQGQFEDIEIGIERLHLEQDAGKSMHDQHATMSYVDLNRSGVALMEIVSKPDMRSSDEAKAYMTKLRSIVRYLGTCDGNMDEGSMRADVNVSVRRPGEAFGTRCEIKNVNSIRFIGQAIEYEARRQIGILEDGGTIEQETRLFDPNKGETRSMRSKEDAHDYRYFPDPDLLPLEFDDAFVTALAADLPELPDDKKERFVRELGLSVYDASVLVSEKAIADYFEAVAAGRDGKTAANWVINDLLGALNRTGKDIEQTPVSPAQLGAIIDLIKAGTISGKIAKDLFEIVLTEGGDPAEIVESRGMKQVTDTGAIEKAVDEIIAANPDQVEKVKAKPTMAAWFVGQVMKATGGKANPQAVQALVKAKLGIEE.

It belongs to the GatB/GatE family. GatB subfamily. In terms of assembly, heterotrimer of A, B and C subunits.

It carries out the reaction L-glutamyl-tRNA(Gln) + L-glutamine + ATP + H2O = L-glutaminyl-tRNA(Gln) + L-glutamate + ADP + phosphate + H(+). The enzyme catalyses L-aspartyl-tRNA(Asn) + L-glutamine + ATP + H2O = L-asparaginyl-tRNA(Asn) + L-glutamate + ADP + phosphate + 2 H(+). Its function is as follows. Allows the formation of correctly charged Asn-tRNA(Asn) or Gln-tRNA(Gln) through the transamidation of misacylated Asp-tRNA(Asn) or Glu-tRNA(Gln) in organisms which lack either or both of asparaginyl-tRNA or glutaminyl-tRNA synthetases. The reaction takes place in the presence of glutamine and ATP through an activated phospho-Asp-tRNA(Asn) or phospho-Glu-tRNA(Gln). This is Aspartyl/glutamyl-tRNA(Asn/Gln) amidotransferase subunit B from Rhizobium etli (strain CIAT 652).